The chain runs to 588 residues: Adenine deaminase (588 aa).

This sequence belongs to the metallo-dependent hydrolases superfamily. Adenine deaminase family. In terms of assembly, homodimer. Requires Mn(2+) as cofactor.

The catalysed reaction is adenine + H2O + H(+) = hypoxanthine + NH4(+). The polypeptide is Adenine deaminase (Escherichia coli O17:K52:H18 (strain UMN026 / ExPEC)).